Reading from the N-terminus, the 576-residue chain is MTKSNISKDNGPLDEVEGIKERSNFLRGTIAEGLEDRITGAISDEDNKLLKFHGSYQQDDRDLRDERRRKKLEPAYQFMIRVRTPGGVTTPEQWLVMDDLAHKYANGSMRLTTRQTFQLHGIVKWDLKKTMQGMNQALMTTIAACGDINRNVMCNVNPEQSDVHAEVYEWSKKVSDHLLPETNAYHEIWLEDKKIVDSREESEPIYGSTYLPRKFKIGIAVPPSNDIDIYSQDLGFIAIVEEGKLLGFNVAVGGGMGMTHGDTNTYPQISRVIGFCVPEKVTEVAEKVVTIQRDFGNRSNRKNARFKYTIDSRGIDWFIDELNERLGWELEGKRHYEFDSNGDSYGWIEGKDYWHLTLFIQNGRIKDVEDYPLMTGLREIAKVHTGDFRLTPNQNLIIANVSSDNKKQINDLVEKFNLTEGKTYSGLRRNSMACVAFPTCGLAMAESERYLPELLDKIEVILDESGLREEEIVIRMSGCPNGCSRPALAEIAFIGKAPGKYNMYLGGSFNGSRLNKLYKENIGEEEILNTLRPIFIDFAKDKQKDEHFGDFVIRAGYVEEVKSGLDFHSSKEDVRS.

[4Fe-4S] cluster-binding residues include C434, C440, C479, and C483. Residue C483 participates in siroheme binding.

Belongs to the nitrite and sulfite reductase 4Fe-4S domain family. In terms of assembly, alpha(8)-beta(8). The alpha component is a flavoprotein, the beta component is a hemoprotein. It depends on siroheme as a cofactor. [4Fe-4S] cluster serves as cofactor.

The enzyme catalyses hydrogen sulfide + 3 NADP(+) + 3 H2O = sulfite + 3 NADPH + 4 H(+). The protein operates within sulfur metabolism; hydrogen sulfide biosynthesis; hydrogen sulfide from sulfite (NADPH route): step 1/1. Component of the sulfite reductase complex that catalyzes the 6-electron reduction of sulfite to sulfide. This is one of several activities required for the biosynthesis of L-cysteine from sulfate. The sequence is that of Sulfite reductase [NADPH] hemoprotein beta-component from Oceanobacillus iheyensis (strain DSM 14371 / CIP 107618 / JCM 11309 / KCTC 3954 / HTE831).